The chain runs to 361 residues: ATP-dependent 6-phosphofructokinase 1 (361 aa).

ATP-binding positions include Gly14, 79-80 (KG), and 116-119 (GDGS). Mg(2+) is bound at residue Asp117. Residues 140–142 (TID), Arg177, 184–186 (MGR), Glu237, Arg278, and 284–287 (HIQR) each bind substrate. Asp142 (proton acceptor) is an active-site residue.

It belongs to the phosphofructokinase type A (PFKA) family. Mixed-substrate PFK group III subfamily. In terms of assembly, homodimer or homotetramer. It depends on Mg(2+) as a cofactor.

The protein localises to the cytoplasm. It carries out the reaction beta-D-fructose 6-phosphate + ATP = beta-D-fructose 1,6-bisphosphate + ADP + H(+). It participates in carbohydrate degradation; glycolysis; D-glyceraldehyde 3-phosphate and glycerone phosphate from D-glucose: step 3/4. In terms of biological role, catalyzes the phosphorylation of D-fructose 6-phosphate to fructose 1,6-bisphosphate by ATP, the first committing step of glycolysis. This chain is ATP-dependent 6-phosphofructokinase 1, found in Synechocystis sp. (strain ATCC 27184 / PCC 6803 / Kazusa).